Here is a 239-residue protein sequence, read N- to C-terminus: MIKYKRILIKLSGEGFANKEKNLAIDFELVAKIASQLKIIIEKGVQVSIVVGGGNFWRGVSAEKNGIPRNRADFIGMLATEMNALALQSGFEKAGLKARVQSSINIDQKVAENYINEKTLKYLNNGEVVIFAGGTGRPYFTTDTAATLFAAEIKAEVILMGKNKVDGVYDSDPKKNENAKHFSKITYDQILEKKLQVMDLTATSMARDNNINLIVFNLLEDNSIIKALEGKITHTEVTR.

ATP is bound at residue 10 to 13 (KLSG). A UMP-binding site is contributed by Gly-53. Residues Gly-54 and Arg-58 each coordinate ATP. Residues Asp-73 and 135 to 142 (TGRPYFTT) each bind UMP. 3 residues coordinate ATP: Asn-163, Tyr-169, and Asp-172.

This sequence belongs to the UMP kinase family. In terms of assembly, homohexamer.

Its subcellular location is the cytoplasm. The enzyme catalyses UMP + ATP = UDP + ADP. It functions in the pathway pyrimidine metabolism; CTP biosynthesis via de novo pathway; UDP from UMP (UMPK route): step 1/1. Its activity is regulated as follows. Inhibited by UTP. In terms of biological role, catalyzes the reversible phosphorylation of UMP to UDP. The sequence is that of Uridylate kinase from Mycoplasmopsis synoviae (strain 53) (Mycoplasma synoviae).